We begin with the raw amino-acid sequence, 345 residues long: UDP-N-acetylenolpyruvoylglucosamine reductase (345 aa).

The 170-residue stretch at 16 to 185 folds into the FAD-binding PCMH-type domain; the sequence is VNAFAKSVVT…VSVGLRLCKK (170 aa). Residue Arg-162 is part of the active site. Residue Ser-231 is the Proton donor of the active site. The active site involves Glu-328.

This sequence belongs to the MurB family. FAD serves as cofactor.

Its subcellular location is the cytoplasm. The enzyme catalyses UDP-N-acetyl-alpha-D-muramate + NADP(+) = UDP-N-acetyl-3-O-(1-carboxyvinyl)-alpha-D-glucosamine + NADPH + H(+). The protein operates within cell wall biogenesis; peptidoglycan biosynthesis. Functionally, cell wall formation. The protein is UDP-N-acetylenolpyruvoylglucosamine reductase of Blochmanniella pennsylvanica (strain BPEN).